Consider the following 510-residue polypeptide: ATP synthase subunit alpha (510 aa).

170–177 (GDRQTGKT) serves as a coordination point for ATP.

It belongs to the ATPase alpha/beta chains family. As to quaternary structure, F-type ATPases have 2 components, CF(1) - the catalytic core - and CF(0) - the membrane proton channel. CF(1) has five subunits: alpha(3), beta(3), gamma(1), delta(1), epsilon(1). CF(0) has three main subunits: a(1), b(2) and c(9-12). The alpha and beta chains form an alternating ring which encloses part of the gamma chain. CF(1) is attached to CF(0) by a central stalk formed by the gamma and epsilon chains, while a peripheral stalk is formed by the delta and b chains.

It is found in the cell inner membrane. It carries out the reaction ATP + H2O + 4 H(+)(in) = ADP + phosphate + 5 H(+)(out). Functionally, produces ATP from ADP in the presence of a proton gradient across the membrane. The alpha chain is a regulatory subunit. This chain is ATP synthase subunit alpha, found in Acidiphilium cryptum (strain JF-5).